The following is a 567-amino-acid chain: uncharacterized protein (567 aa).

Residues 1–26 are disordered; sequence MPSEKATTRHLPGAVETLSPRTGRRP. 6 helical membrane-spanning segments follow: residues 57–77, 90–110, 142–162, 173–193, 221–241, and 257–277; these read AILV…TVAF, VSFG…TYWL, VALA…IIYG, LFSM…LTEF, MLVW…TAIF, and VLIL…ILAW. Residues 278–329 form the HAMP domain; it reads LTATPVRVVREALNRVEQGDLSGDLVVFDGTELGELQRGFNRMVEGLRERER. In terms of domain architecture, Guanylate cyclase spans 361–485; that stretch reads AVVFVDIVGS…EPVNEAARLC (125 aa).

It belongs to the adenylyl cyclase class-3 family.

Its subcellular location is the cell membrane. This is an uncharacterized protein from Mycobacterium tuberculosis (strain ATCC 25618 / H37Rv).